The primary structure comprises 172 residues: uncharacterized protein (172 aa).

The next 3 helical transmembrane spans lie at 44-68 (VLVSSVLGALKVILIPCASTYAALT), 86-110 (LASYAMAWLLNILTIAVIIGLVFSL), and 117-135 (VVFISLGLLMSVTTSVTLF).

The protein belongs to the chlamydial CPn_0442/CT_006/TC_0274 family.

The protein localises to the cell membrane. This is an uncharacterized protein from Chlamydia pneumoniae (Chlamydophila pneumoniae).